Here is a 753-residue protein sequence, read N- to C-terminus: Polyadenylate-binding protein, cytoplasmic and nuclear (753 aa).

The segment covering methionine 1–serine 43 has biased composition (low complexity). A disordered region spans residues methionine 1–serine 49. RRM domains are found at residues alanine 48–arginine 126, glycine 136–serine 213, threonine 229–lysine 306, and valine 332–arginine 460. Disordered regions lie at residues valine 363–lysine 417, arginine 607–glycine 649, and glycine 727–serine 753. The span at aspartate 376–lysine 417 shows a compositional bias: basic and acidic residues. Positions arginine 607–proline 619 are enriched in gly residues. The span at glutamine 633–glycine 649 shows a compositional bias: low complexity. Residues alanine 647–lysine 724 enclose the PABC domain. The segment covering proline 737–serine 753 has biased composition (basic and acidic residues).

Belongs to the polyadenylate-binding protein type-1 family.

Its subcellular location is the cytoplasm. It is found in the nucleus. Binds the poly(A) tail of mRNA. Appears to be an important mediator of the multiple roles of the poly(A) tail in mRNA biogenesis, stability and translation. In the nucleus, involved in both mRNA cleavage and polyadenylation. Is also required for efficient mRNA export to the cytoplasm. Acts in concert with a poly(A)-specific nuclease (PAN) to affect poly(A) tail shortening, which may occur concomitantly with either nucleocytoplasmic mRNA transport or translational initiation. In the cytoplasm, stimulates translation initiation and regulates mRNA decay through translation termination-coupled poly(A) shortening, probably mediated by PAN. This is Polyadenylate-binding protein, cytoplasmic and nuclear (pab1) from Aspergillus terreus (strain NIH 2624 / FGSC A1156).